The sequence spans 545 residues: Threonine--tRNA ligase catalytic subunit (545 aa).

Positions 139 to 433 (DHRLIGEKLD…LLEHFKGKLP (295 aa)) are catalytic. Positions 231, 282, and 410 each coordinate Zn(2+).

This sequence belongs to the class-II aminoacyl-tRNA synthetase family. As to quaternary structure, homodimer. Probably interacts with its editing subunit. Zn(2+) is required as a cofactor.

Its subcellular location is the cytoplasm. It catalyses the reaction tRNA(Thr) + L-threonine + ATP = L-threonyl-tRNA(Thr) + AMP + diphosphate + H(+). Functionally, catalyzes the attachment of threonine to tRNA(Thr) in a two-step reaction: L-threonine is first activated by ATP to form Thr-AMP and then transferred to the acceptor end of tRNA(Thr). Also activates L-serine and transfers it to tRNA(Thr) but cannot deacylate incorrectly charged amino acid; unlike most archaea the editing function is found in a freestanding protein. The protein is Threonine--tRNA ligase catalytic subunit of Saccharolobus islandicus (strain Y.G.57.14 / Yellowstone #1) (Sulfolobus islandicus).